The following is a 429-amino-acid chain: Cleavage stimulation factor subunit 50 (429 aa).

A hydrophobic region spans residues 20 to 41; it reads LNALIVAHLRHHNLSQVASAVA. WD repeat units follow at residues 121–160, 174–213, 218–257, 264–303, 308–347, 351–392, and 396–429; these read EHKS…QMIS, DHAE…AKRA, QDTH…CFLP, GVSG…CVRS, HGKS…MVKE, AKRV…KVAK, and NHNG…KESV.

Homodimer. Belongs to the CSTF complex. Forms a complex with cleavage and polyadenylation specificity factor (CPSF) subunits CSTF64, PABN3, CPSF30, FIPS5 and CPSF100.

Its subcellular location is the nucleus. In terms of biological role, one of the multiple factors required for polyadenylation and 3'-end cleavage of pre-mRNAs. May be responsible for the interaction of CSTF with other factors to form a stable complex on the pre-mRNA. This chain is Cleavage stimulation factor subunit 50, found in Arabidopsis thaliana (Mouse-ear cress).